The primary structure comprises 514 residues: 1-pyrroline-5-carboxylate dehydrogenase (514 aa).

Catalysis depends on residues glutamate 286 and cysteine 320.

The protein belongs to the aldehyde dehydrogenase family. RocA subfamily.

It catalyses the reaction L-glutamate 5-semialdehyde + NAD(+) + H2O = L-glutamate + NADH + 2 H(+). Its pathway is amino-acid degradation; L-proline degradation into L-glutamate; L-glutamate from L-proline: step 2/2. This chain is 1-pyrroline-5-carboxylate dehydrogenase, found in Staphylococcus epidermidis (strain ATCC 12228 / FDA PCI 1200).